A 68-amino-acid polypeptide reads, in one-letter code: Conotoxin Vx2 (68 aa).

The signal sequence occupies residues 1-20 (MMSKLGVLVTICLLLFPLTA). The propeptide occupies 21-47 (LPLDGDQPADHPAKRTQDHNLASPISA). 3 cysteine pairs are disulfide-bonded: C55–C68, C56–C61, and C57–C65.

The protein belongs to the conotoxin M superfamily. In terms of tissue distribution, expressed by the venom duct.

Its subcellular location is the secreted. Its function is as follows. In vivo, elicits a series of symptoms, such as being sedative, tail stiffening and twisted jumping, when injected intracranially into mice. This Conus vexillum (Flag cone) protein is Conotoxin Vx2.